We begin with the raw amino-acid sequence, 641 residues long: Protein zwilch (641 aa).

S312 is modified (phosphoserine).

The protein belongs to the ZWILCH family. As to quaternary structure, component of the RZZ complex composed of rod, Zw10 and Zwilch.

It localises to the cytoplasm. It is found in the chromosome. The protein resides in the centromere. The protein localises to the kinetochore. Its subcellular location is the cytoskeleton. It localises to the spindle. Its function is as follows. Essential component of the mitotic checkpoint, which prevents cells from prematurely exiting mitosis. Required for the assembly of the dynein-dynactin, Mad2 complexes and spindly/CG15415 onto kinetochores. Its function related to the spindle assembly machinery is proposed to depend on its association in the RZZ complex. Failure to assemble the complex due to the absence of any one of its components, results in the incorrect redistribution of the remaining components to diverse membrane compartments. The sequence is that of Protein zwilch from Drosophila melanogaster (Fruit fly).